The primary structure comprises 171 residues: MNKANSFSKEELVTCGHGNLFGANSPRLPIDNMLMIDRITKINDDGGEFGKGEIVAELDIDPSLWFFGCHFETDPVMPGCLGLDAMWQLVGFFLGWEGAEGKGRALGVGEVKFTGQVLPDAKKVTYKLTIKRKVYRKLVMGIADAVMEVDGREIYSATDLKVGIFTDTSSF.

H70 is a catalytic residue.

This sequence belongs to the thioester dehydratase family. FabA subfamily. As to quaternary structure, homodimer.

The protein resides in the cytoplasm. The catalysed reaction is a (3R)-hydroxyacyl-[ACP] = a (2E)-enoyl-[ACP] + H2O. It catalyses the reaction (3R)-hydroxydecanoyl-[ACP] = (2E)-decenoyl-[ACP] + H2O. It carries out the reaction (2E)-decenoyl-[ACP] = (3Z)-decenoyl-[ACP]. It functions in the pathway lipid metabolism; fatty acid biosynthesis. Necessary for the introduction of cis unsaturation into fatty acids. Catalyzes the dehydration of (3R)-3-hydroxydecanoyl-ACP to E-(2)-decenoyl-ACP and then its isomerization to Z-(3)-decenoyl-ACP. Can catalyze the dehydratase reaction for beta-hydroxyacyl-ACPs with saturated chain lengths up to 16:0, being most active on intermediate chain length. The polypeptide is 3-hydroxydecanoyl-[acyl-carrier-protein] dehydratase (Shewanella loihica (strain ATCC BAA-1088 / PV-4)).